Reading from the N-terminus, the 253-residue chain is ATP synthase subunit a (253 aa).

Helical transmembrane passes span 30–50 (FTNAAFFMLVIVALASLVLLA), 88–108 (FFPFVFSIFMFVFLANLIGLV), 118–138 (IAVTFGLAMIVIGTVVIYGLI), 144–164 (FLGIFAPSGVSPLLLPFMIMI), 184–204 (MLAGHITLKVMGGFVAGLLGA), and 211–231 (VAPLPLAMVVIFTAFELLVAF).

Belongs to the ATPase A chain family. In terms of assembly, F-type ATPases have 2 components, CF(1) - the catalytic core - and CF(0) - the membrane proton channel. CF(1) has five subunits: alpha(3), beta(3), gamma(1), delta(1), epsilon(1). CF(0) has three main subunits: a(1), b(2) and c(9-12). The alpha and beta chains form an alternating ring which encloses part of the gamma chain. CF(1) is attached to CF(0) by a central stalk formed by the gamma and epsilon chains, while a peripheral stalk is formed by the delta and b chains.

The protein resides in the cell inner membrane. Key component of the proton channel; it plays a direct role in the translocation of protons across the membrane. The sequence is that of ATP synthase subunit a from Beijerinckia indica subsp. indica (strain ATCC 9039 / DSM 1715 / NCIMB 8712).